We begin with the raw amino-acid sequence, 181 residues long: Inner membrane-spanning protein YciB (181 aa).

5 helical membrane-spanning segments follow: residues 3-23 (LLFDFFPIVLFFIVYKFFGIY), 54-74 (SLAIIMVLGGATLFFQNPWFI), 81-101 (IYWLSALVFYGSSYIGSKPLI), 119-139 (LNLAWTLFFIVMGALNLYVAY), and 149-169 (FKLFGGVGFTLLFVLIQAFYL).

Belongs to the YciB family.

The protein localises to the cell inner membrane. Its function is as follows. Plays a role in cell envelope biogenesis, maintenance of cell envelope integrity and membrane homeostasis. The sequence is that of Inner membrane-spanning protein YciB from Legionella pneumophila subsp. pneumophila (strain Philadelphia 1 / ATCC 33152 / DSM 7513).